The sequence spans 610 residues: Terminase, large subunit (610 aa).

A ssDNA-binding region spans residues 30–94 (RKDEDGIHWI…SRYMGLPNLK (65 aa)). An ATPase activity region spans residues 131 to 301 (DYGVIKVQLR…NHFYDIWTAA (171 aa)). Q138 and Q143 together coordinate ATP. Positions 161-167 (SRQLGKT) match the Walker A motif motif. R202 contributes to the ATP binding site. Positions 251–256 (MIYIDE) match the Walker B motif motif. E256 functions as the For ATPase activity in the catalytic mechanism. Positions 285–287 (TTT) match the ATPase coupling motif. Residues 328–352 (IFDDGWQWSIQTINGSSLAQFRQEH) are binding to the portal protein. Positions 360–559 (SGTLISGMKL…FGWLSTQSKF (200 aa)) are nuclease activity. Mg(2+) contacts are provided by D401, E458, and D542.

This sequence belongs to the Tequatrovirus large terminase family. As to quaternary structure, interacts with the terminase small subunit; the active complex is composed of a pentamer of terminase large subunits and a dodecamer of terminase small subunits. Interacts with the portal protein. Interacts with the RNA polymerase sigma factor gp55. Requires Mg(2+) as cofactor. Phosphorylated.

Its activity is regulated as follows. Stimulated up to 50 to 100-fold by the terminase small subunit. Modestly activated by portal protein and single-stranded binding protein gp32 multimers. In terms of biological role, the terminase large subunit acts as an ATP driven molecular motor necessary for viral DNA translocation into empty capsids and as an endonuclease that cuts the viral genome to initiate and to end a packaging reaction. The terminase lies at a unique vertex of the procapsid and is composed of two subunits, a small terminase subunit involved in viral DNA recognition (packaging sequence), and a large terminase subunit possessing endonucleolytic and ATPase activities. Both terminase subunits heterooligomerize and are docked on the portal protein to form the packaging machine. The terminase large subunit exhibits endonuclease activity and cleaves the viral genome concatemer once the capsid is full (headful packaging). Once the capsid is packaged with the DNA, the terminase complex is substituted by the tail. This is Terminase, large subunit (17) from Escherichia coli (Bacteriophage T4).